The chain runs to 61 residues: Large ribosomal subunit protein uL30 (61 aa).

The protein belongs to the universal ribosomal protein uL30 family. Part of the 50S ribosomal subunit.

The chain is Large ribosomal subunit protein uL30 from Chromobacterium violaceum (strain ATCC 12472 / DSM 30191 / JCM 1249 / CCUG 213 / NBRC 12614 / NCIMB 9131 / NCTC 9757 / MK).